Consider the following 261-residue polypeptide: Complex I assembly factor TIMMDC1, mitochondrial (261 aa).

3 helical membrane-spanning segments follow: residues 67–87 (LNSVYQAGFLGFLIGAIYGGV), 131–151 (WGWRVGLFTTSYFGIITCMSV), and 183–203 (AGGIIGGFLGGVAGVTSLLLM).

Belongs to the Tim17/Tim22/Tim23 family. Associates with complex I assembly intermediates during its biogenesis in a NdufAF3 and NdufAF4 dependent manner.

It localises to the membrane. Its function is as follows. Chaperone protein involved in the assembly of the mitochondrial NADH:ubiquinone oxidoreductase complex (complex I). Essential for viability. This chain is Complex I assembly factor TIMMDC1, mitochondrial, found in Drosophila melanogaster (Fruit fly).